A 406-amino-acid chain; its full sequence is MDQSGMEIPVTLIIKAPNQKYSDQTISCFLNWTVGKLKTHLSNVYPSKPLTKDQRLVYSGRLLPDHLQLKDILRKQDEYHMVHLVCTSRTPPSSPKSSTNRESHEALASSSNSSSDHSGSTTPSSGQETLSLAVGSSSEGLRQRTLPQAQTDQAQSHQFPYVMQGNVDNQFPGQAAPPGFPVYPAFSPLQMLWWQQMYAHQYYMQYQAAVSAQATSNVNPTQPTTSQPLNLAHVPGEEPPPAPNLVAQENRPMNENVQMNAQGGPVLNEEDFNRDWLDWMYTFSRAAILLSIVYFYSSFSRFIMVMGAMLLVYLHQAGWFPFRQEGGHQQAPNNNAEVNNDGQNANNLELEEMERLMDDGLEDESGEDGGEDASAIQRPGLMASAWSFITTFFTSLIPEGPPQVAN.

The Ubiquitin-like domain maps to 10 to 89; that stretch reads VTLIIKAPNQ…HMVHLVCTSR (80 aa). The tract at residues 86–154 is disordered; it reads CTSRTPPSSP…TLPQAQTDQA (69 aa). Composition is skewed to low complexity over residues 87 to 98 and 106 to 126; these read TSRTPPSSPKSS and ALAS…PSSG. Positions 127-154 are enriched in polar residues; that stretch reads QETLSLAVGSSSEGLRQRTLPQAQTDQA. Residues 302–322 form a helical membrane-spanning segment; it reads FIMVMGAMLLVYLHQAGWFPF.

The protein resides in the membrane. In terms of biological role, could be involved in the unfolded protein response (UPR) pathway. The protein is Homocysteine-responsive endoplasmic reticulum-resident ubiquitin-like domain member 2 protein (HERPUD2) of Homo sapiens (Human).